Consider the following 75-residue polypeptide: Beta-defensin 30 (75 aa).

The N-terminal stretch at 1–22 (MGSLQLILVLFVLLSDVPPVRS) is a signal peptide. 3 disulfide bridges follow: cysteine 35–cysteine 62, cysteine 42–cysteine 56, and cysteine 46–cysteine 63.

It belongs to the beta-defensin family.

The protein resides in the secreted. Has antibacterial activity. The chain is Beta-defensin 30 (Defb30) from Rattus norvegicus (Rat).